A 271-amino-acid polypeptide reads, in one-letter code: Urease accessory protein UreD (271 aa).

Belongs to the UreD family. In terms of assembly, ureD, UreF and UreG form a complex that acts as a GTP-hydrolysis-dependent molecular chaperone, activating the urease apoprotein by helping to assemble the nickel containing metallocenter of UreC. The UreE protein probably delivers the nickel.

The protein localises to the cytoplasm. Required for maturation of urease via the functional incorporation of the urease nickel metallocenter. The polypeptide is Urease accessory protein UreD (Bacillus sp. (strain TB-90)).